A 320-amino-acid chain; its full sequence is Bifunctional phosphoglucose/phosphomannose isomerase (320 aa).

In terms of domain architecture, SIS spans 20–153 (IAKDLTPYKG…NLLGVDKDEL (134 aa)). Residues Gly-37, Ser-38, Ser-80, Ser-82, Thr-85, and Arg-132 each contribute to the D-fructose 6-phosphate site. The active-site Proton acceptor is the Glu-204. 2 residues coordinate D-fructose 6-phosphate: His-220 and Lys-313. The active-site Proton donor is the His-220. Lys-313 acts as the Proton acceptor in catalysis.

The protein belongs to the PGI/PMI family. As to quaternary structure, homodimer.

The catalysed reaction is alpha-D-glucose 6-phosphate = beta-D-fructose 6-phosphate. It carries out the reaction D-mannose 6-phosphate = D-fructose 6-phosphate. Functionally, dual specificity isomerase that catalyzes the isomerization of both glucose-6-phosphate and mannose-6-phosphate to fructose-6-phosphate. In Aquifex aeolicus (strain VF5), this protein is Bifunctional phosphoglucose/phosphomannose isomerase.